The chain runs to 328 residues: Tyrosine--tRNA ligase (328 aa).

Tyrosine 33 provides a ligand contact to L-tyrosine. Positions 38–46 (PSGVLHIGH) match the 'HIGH' region motif. The L-tyrosine site is built by tyrosine 154, glutamine 158, aspartate 161, and glutamine 176. The tract at residues 193 to 227 (EPPTSLHTPLIADLGTGRGKMSSSEGVTISMEDSR) is disordered. The short motif at 212–216 (KMSSS) is the 'KMSKS' region element. Residue serine 215 participates in ATP binding.

The protein belongs to the class-I aminoacyl-tRNA synthetase family. TyrS type 3 subfamily. As to quaternary structure, homodimer.

It localises to the cytoplasm. It carries out the reaction tRNA(Tyr) + L-tyrosine + ATP = L-tyrosyl-tRNA(Tyr) + AMP + diphosphate + H(+). Its function is as follows. Catalyzes the attachment of tyrosine to tRNA(Tyr) in a two-step reaction: tyrosine is first activated by ATP to form Tyr-AMP and then transferred to the acceptor end of tRNA(Tyr). This chain is Tyrosine--tRNA ligase, found in Halorubrum lacusprofundi (strain ATCC 49239 / DSM 5036 / JCM 8891 / ACAM 34).